A 522-amino-acid polypeptide reads, in one-letter code: Neutral amino acid uniporter 4 (522 aa).

10 helical membrane passes run 115–135 (AGVLLGPISLLFFGIISIHCM), 181–201 (LVDWFLVVTQLGFCSVYFVFL), 226–246 (SLDLRIYMFSFLPLIIPLVFI), 255–275 (LSFFANVSMAISLLIVYQYVI), 293–313 (YPLFFGTAIFAFEGIGVVLPL), 329–349 (IGMAIVTTLYISLATLGYFCF), 377–397 (FGIYVTYAIQYYVPAEIILPA), 409–429 (LCEFTMRFFLVCLTCAVAVLI), 435–455 (VISFVGAVSSSTLALILPPLV), and 467–487 (PWVIMKDVGIAVIGFVGFIAG). A glycan (N-linked (GlcNAc...) asparagine) is linked at N515.

The protein belongs to the amino acid/polyamine transporter 2 family.

The protein localises to the lysosome membrane. The enzyme catalyses L-tryptophan(in) = L-tryptophan(out). It carries out the reaction L-alanine(in) = L-alanine(out). It catalyses the reaction L-proline(in) = L-proline(out). Functionally, uniporter that mediates the transport of neutral amino acids like L-tryptophan, proline and alanine. The transport activity is sodium ions-independent, electroneutral and therefore functions via facilitated diffusion. The sequence is that of Neutral amino acid uniporter 4 from Xenopus laevis (African clawed frog).